A 194-amino-acid polypeptide reads, in one-letter code: ATP-dependent Clp protease proteolytic subunit (194 aa).

The active-site Nucleophile is Ser-98. Residue His-123 is part of the active site.

Belongs to the peptidase S14 family. In terms of assembly, fourteen ClpP subunits assemble into 2 heptameric rings which stack back to back to give a disk-like structure with a central cavity, resembling the structure of eukaryotic proteasomes.

The protein localises to the cytoplasm. It carries out the reaction Hydrolysis of proteins to small peptides in the presence of ATP and magnesium. alpha-casein is the usual test substrate. In the absence of ATP, only oligopeptides shorter than five residues are hydrolyzed (such as succinyl-Leu-Tyr-|-NHMec, and Leu-Tyr-Leu-|-Tyr-Trp, in which cleavage of the -Tyr-|-Leu- and -Tyr-|-Trp bonds also occurs).. Cleaves peptides in various proteins in a process that requires ATP hydrolysis. Has a chymotrypsin-like activity. Plays a major role in the degradation of misfolded proteins. This chain is ATP-dependent Clp protease proteolytic subunit, found in Alkaliphilus metalliredigens (strain QYMF).